Here is a 165-residue protein sequence, read N- to C-terminus: MTQVTFKHNPVTLVGTERKVGDKAPNFTVVNRDLEEVTLHDYDGKVRLISVVPSIDTSVCSTQTRKFNEEASNLDNTVVLTISVDLPFAQKKWCAAEGLPNAITLSDHRDLSFGEAYGVVMKELRLLARSVFVVNAAGEIVYTEVVPEGSDHPNYEAAIEAAKKA.

Residues 18-164 (RKVGDKAPNF…YEAAIEAAKK (147 aa)) enclose the Thioredoxin domain. Cys60 (cysteine sulfenic acid (-SOH) intermediate) is an active-site residue. Residues Cys60 and Cys94 are joined by a disulfide bond.

This sequence belongs to the peroxiredoxin family. Tpx subfamily. Homodimer.

The enzyme catalyses a hydroperoxide + [thioredoxin]-dithiol = an alcohol + [thioredoxin]-disulfide + H2O. Its function is as follows. Thiol-specific peroxidase that catalyzes the reduction of hydrogen peroxide and organic hydroperoxides to water and alcohols, respectively. Plays a role in cell protection against oxidative stress by detoxifying peroxides. This is Thiol peroxidase from Listeria monocytogenes serotype 4b (strain F2365).